A 438-amino-acid chain; its full sequence is Exodeoxyribonuclease 7 large subunit (438 aa).

Residues 405-438 form a disordered region; sequence GATSTGPTDDIPSSAARLPSSPAPDARPASGAES.

This sequence belongs to the XseA family. As to quaternary structure, heterooligomer composed of large and small subunits.

It localises to the cytoplasm. It carries out the reaction Exonucleolytic cleavage in either 5'- to 3'- or 3'- to 5'-direction to yield nucleoside 5'-phosphates.. Bidirectionally degrades single-stranded DNA into large acid-insoluble oligonucleotides, which are then degraded further into small acid-soluble oligonucleotides. The protein is Exodeoxyribonuclease 7 large subunit of Clavibacter michiganensis subsp. michiganensis (strain NCPPB 382).